Reading from the N-terminus, the 299-residue chain is Peroxisomal biogenesis factor 19 (299 aa).

The segment at 1 to 63 (MAAAEEGCDA…SPGDTAKDAL (63 aa)) is disordered. The residue at position 2 (alanine 2) is an N-acetylalanine. A docking to the peroxisome membrane and binding to PEX3 region spans residues 2-56 (AAAEEGCDAGVEADRELEELLESALDDFDKAKPSPAPPPTTSAPDASGPQKKSPG). The necessary for PEX19 function on peroxisome biogenesis stretch occupies residues 2-91 (AAAEEGCDAG…QATAEFEKAM (90 aa)). Residues 16–27 (RELEELLESALD) are compositionally biased toward acidic residues. 3 positions are modified to phosphoserine: serine 35, serine 54, and serine 66. A Phosphothreonine modification is found at threonine 236. Cysteine methyl ester is present on cysteine 296. Cysteine 296 carries the S-farnesyl cysteine lipid modification. Residues 297–299 (LIM) constitute a propeptide, removed in mature form.

Belongs to the peroxin-19 family. In terms of assembly, interacts with a broad range of peroxisomal membrane proteins, including PEX3, PEX10, PEX11A, PEX11B, PEX12, PEX13, PEX14 and PEX16, PXMP2/PMP22, PXMP4/PMP24, SLC25A17/PMP34, ABCD1/ALDP, ABCD2/ALDRP, and ABCD3/PMP70. Also interacts with the tumor suppressor CDKN2A/p19ARF. In terms of tissue distribution, ubiquitous.

It is found in the cytoplasm. The protein resides in the peroxisome membrane. In terms of biological role, necessary for early peroxisomal biogenesis. Acts both as a cytosolic chaperone and as an import receptor for peroxisomal membrane proteins (PMPs). Binds and stabilizes newly synthesized PMPs in the cytoplasm by interacting with their hydrophobic membrane-spanning domains, and targets them to the peroxisome membrane by binding to the integral membrane protein PEX3. Excludes CDKN2A from the nucleus and prevents its interaction with MDM2, which results in active degradation of TP53. The chain is Peroxisomal biogenesis factor 19 (PEX19) from Cricetulus griseus (Chinese hamster).